A 214-amino-acid chain; its full sequence is MELYLDTANIDEIKEIASYGLVDGVTTNPSIIAKSGRNFREVIKEICSIVSGPVSAEVLSTKFDGMMKEALELVEIAENVVIKVPLIPEGLKTVVELTKRNIPTNVTLCFSSSQALLAAKAGATYISPFIGRVDDTSWDGMELISEIREIYDNYGYDTRILAASIRGPMHLKESALRGADCATMPHSAFLQLFKHPLTDIGLEKFLEDSKKLKW.

Lysine 83 (schiff-base intermediate with substrate) is an active-site residue.

The protein belongs to the transaldolase family. Type 3B subfamily.

The protein resides in the cytoplasm. The enzyme catalyses D-sedoheptulose 7-phosphate + D-glyceraldehyde 3-phosphate = D-erythrose 4-phosphate + beta-D-fructose 6-phosphate. The protein operates within carbohydrate degradation; pentose phosphate pathway; D-glyceraldehyde 3-phosphate and beta-D-fructose 6-phosphate from D-ribose 5-phosphate and D-xylulose 5-phosphate (non-oxidative stage): step 2/3. Transaldolase is important for the balance of metabolites in the pentose-phosphate pathway. In Leptospira borgpetersenii serovar Hardjo-bovis (strain JB197), this protein is Probable transaldolase.